A 294-amino-acid chain; its full sequence is Endonuclease 3 (294 aa).

Positions 1–24 (MGWSLRMWIVSILVLTQLVNGALC) are cleaved as a signal peptide. The a divalent metal cation site is built by Trp25 and His30. 25 to 30 (WGDAGH) provides a ligand contact to substrate. A disulfide bridge links Cys34 with Cys65. Residues Asp69 and His84 each contribute to the a divalent metal cation site. Residues 69–75 (DEIKKLP), 84–87 (HFAD), and 94–99 (NYEYSR) contribute to the substrate site. 3 disulfides stabilise this stretch: Cys93/Cys241, Cys101/Cys106, and Cys221/Cys228. Residues Asn113 and Tyr131 each coordinate substrate. Asn113 carries an N-linked (GlcNAc...) asparagine glycan. Asn132 is a glycosylation site (N-linked (GlcNAc...) asparagine). A divalent metal cation contacts are provided by His142, Asp146, His152, His176, and Asp180. A substrate binding region spans residues 142–191 (HYMGDIHQPLHEGFIGDLGGNKIKVHWYNQETNLHRVWDDMIIESALETY). N-linked (GlcNAc...) asparagine glycans are attached at residues Asn193, Asn224, and Asn247. The propeptide at 279–294 (GTLNRIFSAKRKLARA) is removed in mature form.

The protein belongs to the nuclease type I family. As to quaternary structure, monomer. The cofactor is Zn(2+). It depends on Mn(2+) as a cofactor.

The catalysed reaction is Endonucleolytic cleavage to 5'-phosphomononucleotide and 5'-phosphooligonucleotide end-products.. In terms of biological role, endonuclease that can use RNA and single-stranded DNA as substrates. In contradiction with PubMed:23620482, cannot hydrolyze single-stranded DNA and does not cleave mismatches. The chain is Endonuclease 3 from Arabidopsis thaliana (Mouse-ear cress).